We begin with the raw amino-acid sequence, 206 residues long: Ribosomal RNA large subunit methyltransferase E (206 aa).

Positions 60, 62, 80, 96, and 121 each coordinate S-adenosyl-L-methionine. The Proton acceptor role is filled by K161.

This sequence belongs to the class I-like SAM-binding methyltransferase superfamily. RNA methyltransferase RlmE family.

The protein localises to the cytoplasm. The enzyme catalyses uridine(2552) in 23S rRNA + S-adenosyl-L-methionine = 2'-O-methyluridine(2552) in 23S rRNA + S-adenosyl-L-homocysteine + H(+). Specifically methylates the uridine in position 2552 of 23S rRNA at the 2'-O position of the ribose in the fully assembled 50S ribosomal subunit. In Stutzerimonas stutzeri (strain A1501) (Pseudomonas stutzeri), this protein is Ribosomal RNA large subunit methyltransferase E.